We begin with the raw amino-acid sequence, 243 residues long: Cyclin-dependent kinase 20 (243 aa).

A Protein kinase domain is found at 4–243; that stretch reads YCILGRIGEG…IHLSCRFLSV (240 aa). ATP is bound by residues 10 to 18 and lysine 33; that span reads IGEGAHGIV. The active-site Proton acceptor is aspartate 127.

The protein belongs to the protein kinase superfamily. CMGC Ser/Thr protein kinase family. CDC2/CDKX subfamily. As to quaternary structure, monomer. Interacts with TBC1D32 and MAK.

The protein localises to the nucleus. It localises to the cytoplasm. It is found in the cell projection. Its subcellular location is the cilium. It catalyses the reaction L-seryl-[protein] + ATP = O-phospho-L-seryl-[protein] + ADP + H(+). The catalysed reaction is L-threonyl-[protein] + ATP = O-phospho-L-threonyl-[protein] + ADP + H(+). Functionally, required for high-level Shh responses in the developing neural tube. Together with TBC1D32, controls the structure of the primary cilium by coordinating assembly of the ciliary membrane and axoneme, allowing GLI2 to be properly activated in response to SHH signaling. Involved in cell growth. Activates CDK2, a kinase involved in the control of the cell cycle, by phosphorylating residue 'Thr-160'. The protein is Cyclin-dependent kinase 20 (CDK20) of Macaca mulatta (Rhesus macaque).